Here is a 421-residue protein sequence, read N- to C-terminus: MKLAYFDCPAGISGDMCLGALVDAGVPADYLIAQLAKLPMHDEYRLHFERVVKNGVAATKARVPLGERAGHTHRHLPEIRALLETASLPPRAAEWSVRVFVALAHAEALVHNTTPERVHFHEVGATDALVDVVGTCLGLDYLNIEALHCSALPVGGGLVHAAHGVMPVPTPAVVRLWESRRVPVYSNRIHRELVTPTGAAIACALAASFGEMPSMAVLRVGLGAGDMDLPIPNILRLWLGEATEPLLAARARTVTDVHAHAHHDHSHEEVVACLETQTDDLNPQISGYLFERLLAAGAADVFTVPVGMKKSRPGTLMTVLCAPHLLSTCEEILLRETTTLGVRRHFQVRSVLERHHEPVETIFGTVRIKVGSRDQQVLNAQPEFEDCRRLSEQTGQPLKLVQQVALATWHQRRPTQSERQN.

Belongs to the LarC family.

The chain is Putative nickel insertion protein from Gloeobacter violaceus (strain ATCC 29082 / PCC 7421).